A 203-amino-acid polypeptide reads, in one-letter code: Corrinoid adenosyltransferase (203 aa).

A disordered region spans residues 1–21; it reads MNESPEKDQRHRERMERKKAV. ATP is bound at residue 41–47; the sequence is GNGKGKS.

The protein belongs to the Cob(I)alamin adenosyltransferase family. Monomer. Mn(2+) serves as cofactor.

It localises to the cytoplasm. The catalysed reaction is 2 cob(II)yrinate a,c diamide + reduced [electron-transfer flavoprotein] + 2 ATP = 2 adenosylcob(III)yrinate a,c-diamide + 2 triphosphate + oxidized [electron-transfer flavoprotein] + 3 H(+). It carries out the reaction 2 cob(II)alamin + reduced [electron-transfer flavoprotein] + 2 ATP = 2 adenosylcob(III)alamin + 2 triphosphate + oxidized [electron-transfer flavoprotein] + 3 H(+). Its pathway is cofactor biosynthesis; adenosylcobalamin biosynthesis; adenosylcobalamin from cob(II)yrinate a,c-diamide: step 2/7. Its function is as follows. Required for both de novo synthesis of the corrin ring for the assimilation of exogenous corrinoids. Participates in the adenosylation of a variety of incomplete and complete corrinoids. This Pseudomonas aeruginosa (strain ATCC 15692 / DSM 22644 / CIP 104116 / JCM 14847 / LMG 12228 / 1C / PRS 101 / PAO1) protein is Corrinoid adenosyltransferase (cobO).